Here is a 372-residue protein sequence, read N- to C-terminus: Chaperone protein DnaJ (372 aa).

The region spanning 5–70 (DYYDVLGVER…QKRANYDQYG (66 aa)) is the J domain. The CR-type zinc-finger motif lies at 130 to 208 (GTTKDIQINT…CHGDGRVHKK (79 aa)). Zn(2+) contacts are provided by cysteine 143, cysteine 146, cysteine 160, cysteine 163, cysteine 182, cysteine 185, cysteine 196, and cysteine 199. CXXCXGXG motif repeat units lie at residues 143–150 (CDSCDGSG), 160–167 (CSTCHGAG), 182–189 (CPSCHGSG), and 196–203 (CKSCHGDG).

This sequence belongs to the DnaJ family. In terms of assembly, homodimer. Zn(2+) is required as a cofactor.

The protein localises to the cytoplasm. In terms of biological role, participates actively in the response to hyperosmotic and heat shock by preventing the aggregation of stress-denatured proteins and by disaggregating proteins, also in an autonomous, DnaK-independent fashion. Unfolded proteins bind initially to DnaJ; upon interaction with the DnaJ-bound protein, DnaK hydrolyzes its bound ATP, resulting in the formation of a stable complex. GrpE releases ADP from DnaK; ATP binding to DnaK triggers the release of the substrate protein, thus completing the reaction cycle. Several rounds of ATP-dependent interactions between DnaJ, DnaK and GrpE are required for fully efficient folding. Also involved, together with DnaK and GrpE, in the DNA replication of plasmids through activation of initiation proteins. The polypeptide is Chaperone protein DnaJ (Pasteurella multocida (strain Pm70)).